The following is a 177-amino-acid chain: MSCKFVLQLLGFWLLLSQPCRARVTKEWLDEVIHVCGREYVRAILDICAATVGLEAPPLRRRRMTEEAVSSFIKEDAEPFDTMPNLSEKPKTALPEGHPSLPEQQQYVPVSSDSVGSLDDFKKSFHATQGEAEDSSLPELKSLYLDTLSRKKRYTSIYMSHQCCFRGCSRRSLTAAC.

An N-terminal signal peptide occupies residues 1-22; it reads MSCKFVLQLLGFWLLLSQPCRA. 3 cysteine pairs are disulfide-bonded: C36–C164, C48–C177, and C163–C168. The propeptide at 64 to 149 is connecting peptide; that stretch reads MTEEAVSSFI…LKSLYLDTLS (86 aa). The disordered stretch occupies residues 80-114; it reads FDTMPNLSEKPKTALPEGHPSLPEQQQYVPVSSDS. A compositionally biased stretch (polar residues) spans 102 to 114; it reads PEQQQYVPVSSDS.

The protein belongs to the insulin family. In terms of assembly, heterodimer of a B chain and an A chain linked by two disulfide bonds.

It localises to the secreted. Its function is as follows. Relaxin is an ovarian hormone that acts with estrogen to produce dilatation of the birth canal in many mammals. It bears mature young, and allows separation of the pelvic bones. This is Prorelaxin (RLN) from Mesocricetus auratus (Golden hamster).